The primary structure comprises 765 residues: Protein transport protein Sec23A (765 aa).

Position 2 is an N-acetylthreonine (Thr-2). Positions 61, 66, 85, and 88 each coordinate Zn(2+). Thr-308 is modified (phosphothreonine). The stretch at 632–718 (PEPVLLDSSS…EHGGSQARFL (87 aa)) is one Gelsolin-like repeat.

The protein belongs to the SEC23/SEC24 family. SEC23 subfamily. COPII is composed of at least five proteins: the Sec23/24 complex, the Sec13/31 complex and Sar1. Interacts with SEC23IP. Interacts with HTR4. Interacts with SEC16A. Interacts with SLC6A4. Interacts (as part of the Sec23/24 complex) with SEC22B; recruits SEC22B into COPII-coated vesicles and allows the transport of this cargo from the endoplasmic reticulum to the Golgi. Interacts (via Gelsolin-like repeat) with MIA2 and MIA3; specifically involved in the transport of large cargos like the collagen COL7A1. Interacts with DDHD1. Interacts with TMEM39A. Interacts with SACM1L; this interaction is reduced in the absence of TMEM39A. Interacts with kinase FAM20C; transport of FAM20C from the endoplasmic reticulum to the Golgi is likely to be mediated by COPII vesicles. As to expression, high levels in brain and fibroblasts.

It localises to the cytoplasmic vesicle. Its subcellular location is the COPII-coated vesicle membrane. The protein resides in the endoplasmic reticulum membrane. It is found in the cytoplasm. The protein localises to the cytosol. Its function is as follows. Component of the coat protein complex II (COPII) which promotes the formation of transport vesicles from the endoplasmic reticulum (ER). The coat has two main functions, the physical deformation of the endoplasmic reticulum membrane into vesicles and the selection of cargo molecules for their transport to the Golgi complex. Required for the translocation of insulin-induced glucose transporter SLC2A4/GLUT4 to the cell membrane. The protein is Protein transport protein Sec23A of Mus musculus (Mouse).